The chain runs to 239 residues: Non-classical arabinogalactan protein 30 (239 aa).

Residues 1–24 (MGIIGKSVSLTLFALLCFTSSVFT) form the signal peptide. N-linked (GlcNAc...) asparagine glycosylation is present at Asn-106.

Belongs to the non-classical AGP family. Specifically expressed in root tips.

Its subcellular location is the secreted. The protein resides in the cell wall. Its function is as follows. Proteoglycan required for the timing of seed germination. May function in the abscisic acid (ABA) response. The protein is Non-classical arabinogalactan protein 30 of Arabidopsis thaliana (Mouse-ear cress).